Here is a 181-residue protein sequence, read N- to C-terminus: SAGA-associated factor 11 (181 aa).

The segment at 93–114 (FNCMNCGRQIVAGRFAPHLEKC) adopts an SGF11-type zinc-finger fold. Residues 116–125 (GKGRKARAKT) show a composition bias toward basic residues. Positions 116–181 (GKGRKARAKT…FTVRENVKGD (66 aa)) are disordered. Low complexity predominate over residues 126–153 (TRSTTAAQNRNARRSPNPRYSPYPNSAS).

It belongs to the SGF11 family. Component of a deubiquitination module (DUB module) formed by ENY2, SGF11, and UBP22 in Arabidopsis. Interacts directly with ENY2 and UBP22. Interacts with DDA1. Ubiquitinated in DET1-dependent manner. Ubiquitination probably leads to its subsequent proteasomal degradation.

Its subcellular location is the nucleus. The protein localises to the nucleoplasm. Component of a deubiquitination module (DUB module) that specifically deubiquinates monoubiquinated histone H2B (H2Bub). Does not seem to be a component of the TREX-2 complex. Seems to act independently of the SAGA multiprotein complex. The DUB module is responsible for the major H2Bub deubiquitinase activity in Arabidopsis. This chain is SAGA-associated factor 11, found in Arabidopsis thaliana (Mouse-ear cress).